A 74-amino-acid chain; its full sequence is Conotoxin VnMEKL-0222 (74 aa).

Residues methionine 1 to alanine 19 form the signal peptide. Residues leucine 20 to glycine 46 constitute a propeptide that is removed on maturation. Intrachain disulfides connect cysteine 48–cysteine 62, cysteine 55–cysteine 66, and cysteine 61–cysteine 71.

This sequence belongs to the conotoxin O2 superfamily. As to expression, expressed by the venom duct.

It localises to the secreted. The protein is Conotoxin VnMEKL-0222 of Conus ventricosus (Mediterranean cone).